The following is a 380-amino-acid chain: Lipid-A-disaccharide synthase (380 aa).

This sequence belongs to the LpxB family.

The catalysed reaction is a lipid X + a UDP-2-N,3-O-bis[(3R)-3-hydroxyacyl]-alpha-D-glucosamine = a lipid A disaccharide + UDP + H(+). Its pathway is bacterial outer membrane biogenesis; LPS lipid A biosynthesis. Functionally, condensation of UDP-2,3-diacylglucosamine and 2,3-diacylglucosamine-1-phosphate to form lipid A disaccharide, a precursor of lipid A, a phosphorylated glycolipid that anchors the lipopolysaccharide to the outer membrane of the cell. This is Lipid-A-disaccharide synthase from Azotobacter vinelandii (strain DJ / ATCC BAA-1303).